The primary structure comprises 256 residues: uncharacterized protein (256 aa).

Residues 213-243 (TMSMEAKLEAAKKTLEKFKQEAASKRAKRTK) adopt a coiled-coil conformation. The interval 231–256 (KQEAASKRAKRTKPSGSKTTRSTGRK) is disordered. Residues 244 to 256 (PSGSKTTRSTGRK) show a composition bias toward polar residues.

This is an uncharacterized protein from Acanthamoeba polyphaga (Amoeba).